The chain runs to 124 residues: uncharacterized protein (124 aa).

Disordered regions lie at residues 1 to 26 (MRRQ…QPRP) and 100 to 124 (IPGQ…GLRR). Over residues 102-115 (GQQSRNCSLPQTKY) the composition is skewed to polar residues.

Its subcellular location is the cytoplasm. The protein resides in the cytoskeleton. It is found in the cilium basal body. This is an uncharacterized protein from Rattus norvegicus (Rat).